The chain runs to 376 residues: Riboflavin biosynthesis protein RibD (376 aa).

The tract at residues 1–157 (MCFPLPSNSF…PIFFHYIQTK (157 aa)) is deaminase. The 123-residue stretch at 13-135 (MTDLDYMRRA…QLRQAGVEVV (123 aa)) folds into the CMP/dCMP-type deaminase domain. A Zn(2+)-binding site is contributed by H62. E64 serves as the catalytic Proton donor. 2 residues coordinate Zn(2+): C87 and C96. Residues 158 to 376 (RPYVLMKYAM…LLDYVVISPL (219 aa)) form a reductase region. A166 is an NADP(+) binding site. S180 provides a ligand contact to substrate. Residue W182 participates in NADP(+) binding. Position 196 (R196) interacts with substrate. Positions 208 and 212 each coordinate NADP(+). Positions 216 and 219 each coordinate substrate. S233 serves as a coordination point for NADP(+). A substrate-binding site is contributed by E304. An NADP(+)-binding site is contributed by 306–312 (GSSLNFS).

In the N-terminal section; belongs to the cytidine and deoxycytidylate deaminase family. This sequence in the C-terminal section; belongs to the HTP reductase family. Requires Zn(2+) as cofactor.

It carries out the reaction 2,5-diamino-6-hydroxy-4-(5-phosphoribosylamino)-pyrimidine + H2O + H(+) = 5-amino-6-(5-phospho-D-ribosylamino)uracil + NH4(+). The catalysed reaction is 5-amino-6-(5-phospho-D-ribitylamino)uracil + NADP(+) = 5-amino-6-(5-phospho-D-ribosylamino)uracil + NADPH + H(+). It functions in the pathway cofactor biosynthesis; riboflavin biosynthesis; 5-amino-6-(D-ribitylamino)uracil from GTP: step 2/4. It participates in cofactor biosynthesis; riboflavin biosynthesis; 5-amino-6-(D-ribitylamino)uracil from GTP: step 3/4. Its function is as follows. Converts 2,5-diamino-6-(ribosylamino)-4(3h)-pyrimidinone 5'-phosphate into 5-amino-6-(ribosylamino)-2,4(1h,3h)-pyrimidinedione 5'-phosphate. This Actinobacillus pleuropneumoniae (Haemophilus pleuropneumoniae) protein is Riboflavin biosynthesis protein RibD (ribD).